The primary structure comprises 323 residues: Acetyl esterase (323 aa).

The Involved in the stabilization of the negatively charged intermediate by the formation of the oxyanion hole signature appears at 91–93 (HGG). Residues Ser-165, Asp-262, and His-292 contribute to the active site.

It belongs to the 'GDXG' lipolytic enzyme family. As to quaternary structure, homodimer. Interacts with MalT and MelA.

Its subcellular location is the cytoplasm. Its function is as follows. Displays esterase activity towards short chain fatty esters (acyl chain length of up to 8 carbons). Able to hydrolyze triacetylglycerol (triacetin) and tributyrylglycerol (tributyrin), but not trioleylglycerol (triolein) or cholesterol oleate. Negatively regulates MalT activity by antagonizing maltotriose binding. Inhibits MelA galactosidase activity. In Salmonella dublin (strain CT_02021853), this protein is Acetyl esterase.